Here is a 250-residue protein sequence, read N- to C-terminus: Aquaporin SIP2-1 (250 aa).

2 consecutive transmembrane segments (helical) span residues 14 to 34 (PWLV…GALV) and 55 to 75 (VALS…TGGA). An NPA 1 motif is present at residues 78 to 80 (NPL). The next 4 helical transmembrane spans lie at 95–115 (LYLF…ILGV), 132–152 (SVGV…VVIV), 178–200 (FHLL…AWAY), and 211–231 (LLVY…VVTL). The short motif at 191-193 (NPA) is the NPA 2 element.

Belongs to the MIP/aquaporin (TC 1.A.8) family. SIP (TC 1.A.8.10) subfamily. In terms of tissue distribution, expressed in leaves and anthers, and at lower levels in roots.

It is found in the membrane. Aquaporins facilitate the transport of water and small neutral solutes across cell membranes. The chain is Aquaporin SIP2-1 (SIP2-1) from Oryza sativa subsp. japonica (Rice).